The following is a 277-amino-acid chain: NADPH-dependent 7-cyano-7-deazaguanine reductase (277 aa).

86-88 (IES) is a substrate binding site. 88–89 (SK) contributes to the NADPH binding site. Catalysis depends on Cys-184, which acts as the Thioimide intermediate. The active-site Proton donor is the Asp-191. 223 to 224 (HE) lines the substrate pocket. An NADPH-binding site is contributed by 252–253 (RG).

The protein belongs to the GTP cyclohydrolase I family. QueF type 2 subfamily. In terms of assembly, homodimer.

It is found in the cytoplasm. The catalysed reaction is 7-aminomethyl-7-carbaguanine + 2 NADP(+) = 7-cyano-7-deazaguanine + 2 NADPH + 3 H(+). Its pathway is tRNA modification; tRNA-queuosine biosynthesis. Catalyzes the NADPH-dependent reduction of 7-cyano-7-deazaguanine (preQ0) to 7-aminomethyl-7-deazaguanine (preQ1). This Chromohalobacter salexigens (strain ATCC BAA-138 / DSM 3043 / CIP 106854 / NCIMB 13768 / 1H11) protein is NADPH-dependent 7-cyano-7-deazaguanine reductase.